Reading from the N-terminus, the 162-residue chain is NADH-quinone oxidoreductase subunit I (162 aa).

2 consecutive 4Fe-4S ferredoxin-type domains span residues L52–G82 and T93–N122. [4Fe-4S] cluster is bound by residues C62, C65, C68, C72, C102, C105, C108, and C112.

This sequence belongs to the complex I 23 kDa subunit family. In terms of assembly, NDH-1 is composed of 14 different subunits. Subunits NuoA, H, J, K, L, M, N constitute the membrane sector of the complex. [4Fe-4S] cluster serves as cofactor.

Its subcellular location is the cell inner membrane. The enzyme catalyses a quinone + NADH + 5 H(+)(in) = a quinol + NAD(+) + 4 H(+)(out). In terms of biological role, NDH-1 shuttles electrons from NADH, via FMN and iron-sulfur (Fe-S) centers, to quinones in the respiratory chain. The immediate electron acceptor for the enzyme in this species is believed to be ubiquinone. Couples the redox reaction to proton translocation (for every two electrons transferred, four hydrogen ions are translocated across the cytoplasmic membrane), and thus conserves the redox energy in a proton gradient. This is NADH-quinone oxidoreductase subunit I from Methylobacterium nodulans (strain LMG 21967 / CNCM I-2342 / ORS 2060).